Reading from the N-terminus, the 111-residue chain is UPF0125 protein SO_1475 (111 aa).

Residues 88–111 (VRRRRADKAKDEGRANKVTGGRVS) form a disordered region.

This sequence belongs to the UPF0125 (RnfH) family.

The sequence is that of UPF0125 protein SO_1475 from Shewanella oneidensis (strain ATCC 700550 / JCM 31522 / CIP 106686 / LMG 19005 / NCIMB 14063 / MR-1).